The primary structure comprises 437 residues: GTPase Der (437 aa).

2 EngA-type G domains span residues 3–167 and 176–352; these read NLVA…SKEG and PRFA…QART. GTP is bound by residues 9–16, 56–60, 119–122, 182–189, 229–233, and 294–297; these read GRPNVGKS, DTGGW, NKTD, GRPNAGKS, DTAGI, and NKWD. The region spanning 353–437 is the KH-like domain; the sequence is TRIPTARLNE…TPINIFIRQK (85 aa).

The protein belongs to the TRAFAC class TrmE-Era-EngA-EngB-Septin-like GTPase superfamily. EngA (Der) GTPase family. In terms of assembly, associates with the 50S ribosomal subunit.

GTPase that plays an essential role in the late steps of ribosome biogenesis. This is GTPase Der from Phocaeicola vulgatus (strain ATCC 8482 / DSM 1447 / JCM 5826 / CCUG 4940 / NBRC 14291 / NCTC 11154) (Bacteroides vulgatus).